The chain runs to 485 residues: Probable carboxypeptidase S-like 1 (485 aa).

The N-terminal stretch at 1 to 21 is a signal peptide; the sequence is MIFKFFFIFFLIILVIKISES. His-111 contributes to the Zn(2+) binding site. Asp-113 is an active-site residue. Position 142 (Asp-142) interacts with Zn(2+). Residue Glu-177 is the Proton acceptor of the active site. Residues Glu-178, Asp-204, and His-431 each coordinate Zn(2+).

This sequence belongs to the peptidase M20A family. It depends on Zn(2+) as a cofactor.

Its subcellular location is the secreted. This Dictyostelium discoideum (Social amoeba) protein is Probable carboxypeptidase S-like 1.